The sequence spans 394 residues: DNA replication and repair protein RecF (394 aa).

30 to 37 provides a ligand contact to ATP; it reads GRNGFGKT.

This sequence belongs to the RecF family.

It is found in the cytoplasm. The RecF protein is involved in DNA metabolism; it is required for DNA replication and normal SOS inducibility. RecF binds preferentially to single-stranded, linear DNA. It also seems to bind ATP. This chain is DNA replication and repair protein RecF, found in Corynebacterium glutamicum (strain R).